Consider the following 294-residue polypeptide: 4-hydroxy-tetrahydrodipicolinate synthase (294 aa).

Position 46 (threonine 46) interacts with pyruvate. Residue tyrosine 134 is the Proton donor/acceptor of the active site. The Schiff-base intermediate with substrate role is filled by lysine 163. Pyruvate is bound at residue isoleucine 205.

The protein belongs to the DapA family. In terms of assembly, homotetramer; dimer of dimers.

The protein localises to the cytoplasm. The catalysed reaction is L-aspartate 4-semialdehyde + pyruvate = (2S,4S)-4-hydroxy-2,3,4,5-tetrahydrodipicolinate + H2O + H(+). It functions in the pathway amino-acid biosynthesis; L-lysine biosynthesis via DAP pathway; (S)-tetrahydrodipicolinate from L-aspartate: step 3/4. Functionally, catalyzes the condensation of (S)-aspartate-beta-semialdehyde [(S)-ASA] and pyruvate to 4-hydroxy-tetrahydrodipicolinate (HTPA). This Clostridium tetani (strain Massachusetts / E88) protein is 4-hydroxy-tetrahydrodipicolinate synthase.